A 219-amino-acid chain; its full sequence is UPF0502 protein Gmet_0262 (219 aa).

The protein belongs to the UPF0502 family.

This chain is UPF0502 protein Gmet_0262, found in Geobacter metallireducens (strain ATCC 53774 / DSM 7210 / GS-15).